A 789-amino-acid chain; its full sequence is MFNLIRKSTEWGGKTLVLESGKIARQANGAVVVTYGGTTVLSTVVAGKAKEPVDFLPLTVQFVAKSYAVGKIPGGFLKREGKPSDRETLISRLIDRSIRPLFPSGFYDEVSIVCNLLSYDTVTPPEVTALIGATAALAISGVPFNGMVVGARVGYLLSEDKYLLNASADEMLSSSLDLFLSGNKDSVLMVESEASELSESQMLAAISFGHQNCQEVIKLIEEFREESGILPFGFIPHDITSLVDDIASSYTESFSIAYSNIVKKERVLELEKLRDQVLSDMLAKYEQPNGNLQCQYSSQDIISALKSFERSLVRSKIIETSSRIDGRAFNGIRDIEIEIDVLPKTHGSALFTRGNTQALVVTALGTPQDEQIVDDLDGDRRENFLLHYNFPPYAVGESAALRAPGRREIGHGKLAWKAIRYVLPEKSDFPYTIRVVSEITESDGSSSMATVCGASLALMDTGVPIKAPVAGIAMGLIKEGEKFIILSDILGDEDHLGDMDFKVAGTSSGITALQMDMKISGISIEVIEKSLLQAKDGRMHILDKMNLVIQESRECIKNHAPRIESIFINKDKIRNVIGSGGKNIREICEKTGARVEIMQDGTVMIYAINNDAVEYAKNMIMDIVSEPEIGKVFDGTVIEIVKFGAFVSFLGGKRGLIHISEIKNEHINAVGSVISVNDKVKVLVIGIDREYVQLSMRRVDQETGEPIDGELYNIRKTNSDSDDSFLSSGSVNNRHGSEKKRRGSGRSRRSSGGSSYHRDDLHNNGFGNGNRSFNDNRNGNEVPRKPRFF.

Residues Asp-494 and Asp-500 each coordinate Mg(2+). The region spanning Pro-561–Ile-620 is the KH domain. The region spanning Gly-630 to Arg-697 is the S1 motif domain. The disordered stretch occupies residues Gly-709–Phe-789. The span at Ser-737–Arg-749 shows a compositional bias: basic residues. Positions Asn-763–Asn-780 are enriched in low complexity.

This sequence belongs to the polyribonucleotide nucleotidyltransferase family. Mg(2+) serves as cofactor.

It is found in the cytoplasm. The enzyme catalyses RNA(n+1) + phosphate = RNA(n) + a ribonucleoside 5'-diphosphate. Involved in mRNA degradation. Catalyzes the phosphorolysis of single-stranded polyribonucleotides processively in the 3'- to 5'-direction. The polypeptide is Polyribonucleotide nucleotidyltransferase (Ehrlichia ruminantium (strain Gardel)).